The sequence spans 423 residues: Endoplasmic reticulum junction formation protein lunapark (423 aa).

Residues 1-45 are Cytoplasmic-facing; the sequence is MGALLAKWRAKPSTVEVLEKMEKDIQSLEEFRDKNQKLRKIWVAR. Residues 16-40 are a coiled coil; the sequence is EVLEKMEKDIQSLEEFRDKNQKLRK. The chain crosses the membrane as a helical span at residues 46–66; sequence LFFYSTILYILTSLTVYLWYL. The Lumenal segment spans residues 67–77; it reads PDGMTARLLTM. The helical transmembrane segment at 78-98 threads the bilayer; the sequence is LLFLSFPVLIWFVRTLLILWF. Over 99-423 the chain is Cytoplasmic; the sequence is SRRTERNNDA…ETEESFMETE (325 aa). Positions 101 to 128 form a coiled coil; it reads RTERNNDALELLKTEKKKILEEVMEKET. The interval 147–169 is disordered; that stretch reads KELELPVPGPPITPRPGQDLRQR. Thr159 is subject to Phosphothreonine. 3 positions are modified to phosphoserine: Ser177, Ser179, and Ser188. Residue Thr198 is modified to Phosphothreonine. Positions 200–247 are disordered; that stretch reads SLQRDTSAPGGPPERSVQPTPQSNILQRRPGSPATTVSGMAIHPPGPP. Phosphoserine occurs at positions 206 and 215. A compositionally biased stretch (polar residues) spans 216–225; it reads VQPTPQSNIL. Phosphothreonine is present on Thr219. A phosphoserine mark is found at Ser222 and Ser231. The C4-type; plays a role in ER morphology zinc finger occupies 280–305; that stretch reads CQQCFSHNGMALKEEFEYVAFRCAYC. Residues 318-423 are disordered; the sequence is APRLQEINFD…ETEESFMETE (106 aa). Over residues 334-343 the composition is skewed to polar residues; sequence DSQGSVSSVQ. Composition is skewed to acidic residues over residues 370–391 and 414–423; these read QAIE…DDSE and ETEESFMETE.

This sequence belongs to the lunapark family. In terms of assembly, homodimer; homodimerization requires the C4-type zinc finger motif and decreases during mitosis in a phosphorylation-dependent manner. Phosphorylated. Phosphorylation at Thr-159 occurs during interphase. Phosphorylation at Ser-177, Ser-179, Ser-188, Thr-198, Ser-206, Ser-215, Thr-219, Ser-222 and Ser-231 occurs during mitosis; these phosphorylations reduce both its homodimerization and the ER three-way tubular junction formation.

It localises to the endoplasmic reticulum membrane. Endoplasmic reticulum (ER)-shaping membrane protein that plays a role in determining ER morphology. Involved in the stabilization of nascent three-way ER tubular junctions within the ER network. May also play a role as a curvature-stabilizing protein within three-way ER tubular junction network. This Xenopus tropicalis (Western clawed frog) protein is Endoplasmic reticulum junction formation protein lunapark (lnpk).